Reading from the N-terminus, the 459-residue chain is Vicilin (459 aa).

A signal peptide spans 1-28; sequence MAATTMKASFPLLMLMGISFLASVCVSS. In terms of domain architecture, Cupin type-1 1 spans 36–194; it reads FIFKSNKFQT…SFNTDYEEIE (159 aa). 3 disordered regions span residues 235–258, 321–346, and 430–459; these read LSKN…NLRS, ELVG…QGEE, and ENQK…LSSV. A compositionally biased stretch (low complexity) spans 238 to 251; it reads NAKSTSKKSVSSES. Positions 254 to 426 constitute a Cupin type-1 2 domain; sequence FNLRSRGPIY…AFPGSAQEVD (173 aa). Residues 337 to 346 show a composition bias toward acidic residues; sequence DDEEEEQGEE. A compositionally biased stretch (basic and acidic residues) spans 444–459; sequence QRERGSRETRDRLSSV.

It belongs to the 7S seed storage protein family.

It localises to the vacuole. It is found in the aleurone grain. Its function is as follows. Seed storage protein. The protein is Vicilin of Pisum sativum (Garden pea).